A 430-amino-acid polypeptide reads, in one-letter code: KIN17-like protein (430 aa).

The C2H2-type zinc finger occupies 28-50 (CQMCQKQCRDENGFKCHCMSESH). Residues 51–160 (QRQMQVFGQA…KARLKRKRIK (110 aa)) form a winged helix-turn-helix (wHTH) region. A coiled-coil region spans residues 147 to 183 (EQAVKARLKRKRIKSDLAEDERQERMIARQIERAQQS). A Nuclear localization signal (NLS) motif is present at residues 155–158 (KRKR). Disordered regions lie at residues 179–230 (RAQQ…ANKA) and 261–284 (EEED…GKDA). The segment covering 209–224 (EYSDSENDHEGQEEDA) has biased composition (acidic residues). The segment covering 261-278 (EEEDEVSARDKEKEELAK) has biased composition (basic and acidic residues). Residues 283 to 312 (DAINAAEARRSALDELMKEEEKAKERSNRK) are a coiled coil. Residues 319–370 (GIVVKVMSKSLAEKGYCKQKGVVKRVIDKYVGEIEMLESKHVLRVDQDELET) form a C-terminal subdomain A region. The segment at 376–427 (GGLVRIVNGAYRGSNARLLSVDTERFCAKVQVEKGLYDGKVLKAIEYEDICK) is C-terminal subdomain B.

Belongs to the KIN17 family.

The protein localises to the nucleus. The chain is KIN17-like protein from Oryza sativa subsp. indica (Rice).